Consider the following 398-residue polypeptide: Enoyl-[acyl-carrier-protein] reductase [NADH] (398 aa).

NAD(+)-binding positions include 48–53, 74–75, 111–112, and 139–140; these read GASTGY, FE, DA, and LA. Position 225 (Tyr-225) interacts with substrate. Tyr-235 functions as the Proton donor in the catalytic mechanism. NAD(+) is bound by residues Lys-244 and 273–275; that span reads VVT.

Belongs to the TER reductase family. In terms of assembly, monomer.

The enzyme catalyses a 2,3-saturated acyl-[ACP] + NAD(+) = a (2E)-enoyl-[ACP] + NADH + H(+). It participates in lipid metabolism; fatty acid biosynthesis. Functionally, involved in the final reduction of the elongation cycle of fatty acid synthesis (FAS II). Catalyzes the reduction of a carbon-carbon double bond in an enoyl moiety that is covalently linked to an acyl carrier protein (ACP). This chain is Enoyl-[acyl-carrier-protein] reductase [NADH], found in Paraburkholderia phytofirmans (strain DSM 17436 / LMG 22146 / PsJN) (Burkholderia phytofirmans).